Consider the following 357-residue polypeptide: Molybdenum import ATP-binding protein ModC (357 aa).

Residues 1–233 enclose the ABC transporter domain; that stretch reads MRLEVEARLR…PFPTSGPGRR (233 aa). 31 to 38 provides a ligand contact to ATP; the sequence is GRSGSGKT. One can recognise a Mop domain in the interval 293 to 357; sequence GISALNVLPG…AVVKTVALDY (65 aa).

This sequence belongs to the ABC transporter superfamily. Molybdate importer (TC 3.A.1.8) family. As to quaternary structure, the complex is composed of two ATP-binding proteins (ModC), two transmembrane proteins (ModB) and a solute-binding protein (ModA).

The protein localises to the cell inner membrane. It catalyses the reaction molybdate(out) + ATP + H2O = molybdate(in) + ADP + phosphate + H(+). Its function is as follows. Part of the ABC transporter complex ModABC involved in molybdenum import. Responsible for energy coupling to the transport system. The polypeptide is Molybdenum import ATP-binding protein ModC (Rhizobium meliloti (strain 1021) (Ensifer meliloti)).